We begin with the raw amino-acid sequence, 144 residues long: Large ribosomal subunit protein uL15 (144 aa).

Positions 1–57 (MKLNDLSPAPGSRREKHRPGRGIGSGLGKTGGRGHKGQTSRSGGTIAPGFEGGQQPL) are disordered. Residues 21 to 31 (RGIGSGLGKTG) are compositionally biased toward gly residues.

The protein belongs to the universal ribosomal protein uL15 family. In terms of assembly, part of the 50S ribosomal subunit.

Its function is as follows. Binds to the 23S rRNA. This is Large ribosomal subunit protein uL15 from Pseudomonas fluorescens (strain ATCC BAA-477 / NRRL B-23932 / Pf-5).